A 249-amino-acid polypeptide reads, in one-letter code: Carboxy-S-adenosyl-L-methionine synthase (249 aa).

S-adenosyl-L-methionine-binding positions include Y39, 64 to 66, 117 to 118, N132, and R199; these read GCS and DI.

This sequence belongs to the class I-like SAM-binding methyltransferase superfamily. Cx-SAM synthase family. In terms of assembly, homodimer.

It carries out the reaction prephenate + S-adenosyl-L-methionine = carboxy-S-adenosyl-L-methionine + 3-phenylpyruvate + H2O. Its function is as follows. Catalyzes the conversion of S-adenosyl-L-methionine (SAM) to carboxy-S-adenosyl-L-methionine (Cx-SAM). In Aeromonas hydrophila subsp. hydrophila (strain ATCC 7966 / DSM 30187 / BCRC 13018 / CCUG 14551 / JCM 1027 / KCTC 2358 / NCIMB 9240 / NCTC 8049), this protein is Carboxy-S-adenosyl-L-methionine synthase.